Reading from the N-terminus, the 549-residue chain is Lysine-specific demethylase JMJ31 (549 aa).

One can recognise a JmjC domain in the interval 125 to 296 (DYRPGQIYLA…SNMPEHMDSY (172 aa)). Fe cation is bound by residues His-184, Asp-186, and His-266.

The protein belongs to the JARID1 histone demethylase family. It depends on Fe(2+) as a cofactor. In terms of tissue distribution, mostly expressed in leaves and inflorescences, and, to a lower extent, in roots, siliques and stems.

It is found in the nucleus. May function as histone H3 lysine demethylase and be involved in regulation of gene expression. In Arabidopsis thaliana (Mouse-ear cress), this protein is Lysine-specific demethylase JMJ31.